A 407-amino-acid polypeptide reads, in one-letter code: 3-oxoacyl-[acyl-carrier-protein] synthase 1 (407 aa).

The Ketosynthase family 3 (KS3) domain maps to 1–405 (MKRVVITGLG…GTNVSLIIKK (405 aa)). Active-site for beta-ketoacyl synthase activity residues include C164, H299, and H335.

It belongs to the thiolase-like superfamily. Beta-ketoacyl-ACP synthases family. As to quaternary structure, homodimer.

It localises to the cytoplasm. The enzyme catalyses a fatty acyl-[ACP] + malonyl-[ACP] + H(+) = a 3-oxoacyl-[ACP] + holo-[ACP] + CO2. It carries out the reaction (3Z)-decenoyl-[ACP] + malonyl-[ACP] + H(+) = 3-oxo-(5Z)-dodecenoyl-[ACP] + holo-[ACP] + CO2. Its pathway is lipid metabolism; fatty acid biosynthesis. In terms of biological role, involved in the type II fatty acid elongation cycle. Catalyzes the elongation of a wide range of acyl-ACP by the addition of two carbons from malonyl-ACP to an acyl acceptor. Can also use unsaturated fatty acids. Catalyzes a key reaction in unsaturated fatty acid (UFA) synthesis, the elongation of the cis-3-decenoyl-ACP produced by FabA. The protein is 3-oxoacyl-[acyl-carrier-protein] synthase 1 (fabB) of Buchnera aphidicola subsp. Baizongia pistaciae (strain Bp).